We begin with the raw amino-acid sequence, 174 residues long: Methylated protein MJ0556 (174 aa).

CBS domains are found at residues 28–87 (MISG…YLNV) and 91–156 (MLKN…IIKE).

In terms of processing, methylated at an undetermined residue between Ser-2 and Asp-26.

This Methanocaldococcus jannaschii (strain ATCC 43067 / DSM 2661 / JAL-1 / JCM 10045 / NBRC 100440) (Methanococcus jannaschii) protein is Methylated protein MJ0556.